The following is a 199-amino-acid chain: Signal peptidase complex subunit 2 (199 aa).

The Cytoplasmic segment spans residues 1–49 (MGKKDEKSQQGEELVKVNKWDGSAVKHALDDAVKTCLLGDRPQLKEQFG). Residues 50-72 (LVNTRLALCALAVSVAIMAHAWD) traverse the membrane as a helical segment. At 73 to 81 (FTHPFPESR) the chain is on the lumenal side. The helical transmembrane segment at 82–104 (PVLLFSVLAYFALLGILTLHSSF) threads the bilayer. Residues 105–199 (REKGTFAVAL…KKNASSLSSN (95 aa)) lie on the Cytoplasmic side of the membrane.

The protein belongs to the SPCS2 family. In terms of assembly, component of the signal peptidase complex (SPC) composed of a catalytic subunit twr/SEC11 and three accessory subunits Spase12/SPCS1, Spase25/SPCS2 and Spase22-23/SPCS3. The complex induces a local thinning of the ER membrane which is used to measure the length of the signal peptide (SP) h-region of protein substrates. This ensures the selectivity of the complex towards h-regions shorter than 18-20 amino acids.

It is found in the endoplasmic reticulum membrane. Its function is as follows. Component of the signal peptidase complex (SPC) which catalyzes the cleavage of N-terminal signal sequences from nascent proteins as they are translocated into the lumen of the endoplasmic reticulum. Enhances the enzymatic activity of SPC and facilitates the interactions between different components of the translocation site. In Drosophila melanogaster (Fruit fly), this protein is Signal peptidase complex subunit 2 (Spase25).